A 549-amino-acid polypeptide reads, in one-letter code: Calcium-dependent protein kinase 5 (549 aa).

A lipid anchor (N-myristoyl glycine) is attached at G2. Residues D43–G69 form a disordered region. A compositionally biased stretch (low complexity) spans R52 to A64. Residues Y92–I350 form the Protein kinase domain. Residues L98–T106 and K121 each bind ATP. Residue D216 is the Proton acceptor of the active site. Positions A356 to I386 are autoinhibitory domain. EF-hand domains lie at E393–T428, L429–L464, E465–P500, and D501–G534. Ca(2+) is bound by residues D406, D408, S410, E417, D442, D444, S446, T448, E453, D478, D480, S482, Y484, E489, D512, D514, D516, R518, and E523.

It belongs to the protein kinase superfamily. Ser/Thr protein kinase family. CDPK subfamily.

It is found in the membrane. The catalysed reaction is L-seryl-[protein] + ATP = O-phospho-L-seryl-[protein] + ADP + H(+). The enzyme catalyses L-threonyl-[protein] + ATP = O-phospho-L-threonyl-[protein] + ADP + H(+). Activated by calcium. Autophosphorylation may play an important role in the regulation of the kinase activity. Its function is as follows. May play a role in signal transduction pathways that involve calcium as a second messenger. This is Calcium-dependent protein kinase 5 from Oryza sativa subsp. japonica (Rice).